A 192-amino-acid polypeptide reads, in one-letter code: Phosphoheptose isomerase (192 aa).

The region spanning 37–192 (ITDSFKNGGK…MMLIEFEMAK (156 aa)) is the SIS domain. 52–54 (NGG) contacts substrate. Zn(2+) is bound by residues histidine 61 and glutamate 65. Substrate contacts are provided by residues glutamate 65, 93 to 94 (ND), 119 to 121 (STS), serine 124, and glutamine 172. The Zn(2+) site is built by glutamine 172 and histidine 180.

It belongs to the SIS family. GmhA subfamily. As to quaternary structure, homotetramer. Zn(2+) is required as a cofactor.

The protein resides in the cytoplasm. It catalyses the reaction 2 D-sedoheptulose 7-phosphate = D-glycero-alpha-D-manno-heptose 7-phosphate + D-glycero-beta-D-manno-heptose 7-phosphate. It functions in the pathway carbohydrate biosynthesis; D-glycero-D-manno-heptose 7-phosphate biosynthesis; D-glycero-alpha-D-manno-heptose 7-phosphate and D-glycero-beta-D-manno-heptose 7-phosphate from sedoheptulose 7-phosphate: step 1/1. Its function is as follows. Catalyzes the isomerization of sedoheptulose 7-phosphate in D-glycero-D-manno-heptose 7-phosphate. In Glaesserella parasuis serovar 5 (strain SH0165) (Haemophilus parasuis), this protein is Phosphoheptose isomerase.